We begin with the raw amino-acid sequence, 702 residues long: Soluble guanylate cyclase gcy-31 (702 aa).

Heme is bound at residue histidine 104. The stretch at 368–406 (TQQSAELKLLLHQEAQKSRNMRENMNRLKKERRRTDKLL) forms a coiled coil. The Guanylate cyclase domain occupies 435-564 (TILFTDIVEF…ETVYVANKME (130 aa)). Mg(2+)-binding residues include aspartate 440 and aspartate 484. The interval 614-702 (RHGPHRVPSP…QDLTPRKSIT (89 aa)) is disordered. The segment covering 633 to 643 (SQTEDDDDDEL) has biased composition (acidic residues). The span at 683 to 695 (RNSNKTPRQSQDL) shows a compositional bias: polar residues.

It belongs to the adenylyl cyclase class-4/guanylyl cyclase family. In terms of assembly, heterodimer; with other soluble guanylate cyclases. Requires heme as cofactor. Expressed in a pair of bilaterally symmetric neurons in the head.

Its subcellular location is the cytoplasm. It catalyses the reaction GTP = 3',5'-cyclic GMP + diphosphate. May be regulated by molecular oxygen. Probably not activated by nitric oxide (NO). Functionally, synthesizes cyclic GMP (cGMP) from GTP. May play a role in embryogenesis. This chain is Soluble guanylate cyclase gcy-31 (gcy-31), found in Caenorhabditis elegans.